A 363-amino-acid chain; its full sequence is UDP-N-acetylenolpyruvoylglucosamine reductase (363 aa).

Residues 27 to 197 (LGGWATRVVT…LSVDFRLARS (171 aa)) form the FAD-binding PCMH-type domain. The active site involves arginine 175. The Proton donor role is filled by serine 252. Residue glutamate 355 is part of the active site.

It belongs to the MurB family. Requires FAD as cofactor.

The protein resides in the cytoplasm. The catalysed reaction is UDP-N-acetyl-alpha-D-muramate + NADP(+) = UDP-N-acetyl-3-O-(1-carboxyvinyl)-alpha-D-glucosamine + NADPH + H(+). It functions in the pathway cell wall biogenesis; peptidoglycan biosynthesis. In terms of biological role, cell wall formation. This is UDP-N-acetylenolpyruvoylglucosamine reductase from Salinispora arenicola (strain CNS-205).